We begin with the raw amino-acid sequence, 2499 residues long: Probable polyketide synthase 22 (2499 aa).

Residues 11 to 430 form the Ketosynthase family 3 (KS3) domain; that stretch reads DNQVAIVGLG…GSNACVLLSE (420 aa). Catalysis depends on for beta-ketoacyl synthase activity residues Cys177, His316, and His354. The segment at 623-656 is acyl/malonyl transferases; the sequence is GITPSIIVGHSLGEVASAFCSGMIDLETACFVIY. Ser633 functions as the For acyl/malonyl transferase activity in the catalytic mechanism. Residues 922-1044 are N-terminal hotdog fold; the sequence is APINQLGNKN…SRILMKSLDV (123 aa). In terms of domain architecture, PKS/mFAS DH spans 922 to 1209; it reads APINQLGNKN…IASTLSTKSE (288 aa). Catalysis depends on His956, which acts as the Proton acceptor; for dehydratase activity. The interval 1059–1209 is C-terminal hotdog fold; it reads NWSTLKREQL…IASTLSTKSE (151 aa). Asp1121 (proton donor; for dehydratase activity) is an active-site residue. Positions 2414–2491 constitute a Carrier domain; it reads EKEFSIRQDI…QIINIVTTKV (78 aa). At Ser2451 the chain carries O-(pantetheine 4'-phosphoryl)serine.

Pantetheine 4'-phosphate is required as a cofactor.

Its function is as follows. Probable polyketide synthase. This chain is Probable polyketide synthase 22 (pks22), found in Dictyostelium discoideum (Social amoeba).